Consider the following 327-residue polypeptide: Tyrosine--tRNA ligase (327 aa).

Tyrosine 33 serves as a coordination point for L-tyrosine. Residues 38–46 carry the 'HIGH' region motif; that stretch reads PSGVLHLGH. L-tyrosine contacts are provided by tyrosine 154, glutamine 158, aspartate 161, and glutamine 176. The short motif at 212–216 is the 'KMSKS' region element; it reads KMSSS. Serine 215 contributes to the ATP binding site.

It belongs to the class-I aminoacyl-tRNA synthetase family. TyrS type 3 subfamily. As to quaternary structure, homodimer.

It is found in the cytoplasm. It catalyses the reaction tRNA(Tyr) + L-tyrosine + ATP = L-tyrosyl-tRNA(Tyr) + AMP + diphosphate + H(+). Its function is as follows. Catalyzes the attachment of tyrosine to tRNA(Tyr) in a two-step reaction: tyrosine is first activated by ATP to form Tyr-AMP and then transferred to the acceptor end of tRNA(Tyr). The protein is Tyrosine--tRNA ligase of Halobacterium salinarum (strain ATCC 29341 / DSM 671 / R1).